Consider the following 1237-residue polypeptide: Anion exchange protein 2 (1237 aa).

Positions 1-237 (MSSAPRRPAS…SYNLQERRRI (237 aa)) are disordered. The Cytoplasmic portion of the chain corresponds to 1–704 (MSSAPRRPAS…DFRDALDPQC (704 aa)). 2 stretches are compositionally biased toward basic and acidic residues: residues 37 to 49 (ELHR…RFEE) and 58 to 75 (GGEE…EYHR). Composition is skewed to basic residues over residues 76-85 (QSSHHIHHPL) and 94-110 (RRRK…RRRP). Serine 113, serine 132, serine 144, serine 170, and serine 172 each carry phosphoserine. Residues 120–133 (TIEEGEEDEDEASE) are compositionally biased toward acidic residues. A compositionally biased stretch (low complexity) spans 137–151 (ARAPTQPSPASTPSS). Residues 205-215 (GTAGGDDGGAS) show a composition bias toward gly residues. Serine 239 carries the phosphoserine modification. Threonine 253 carries the post-translational modification Phosphothreonine. Lysine 270 is subject to N6-methyllysine. Residues 286–316 (RKNAKGSVQSGREGREPGPTPRARPRAPHKP) form a disordered region. At serine 439 the chain carries Phosphoserine. The segment at 445–466 (SLLGHHHGQGAESDPHVTEPLI) is disordered. Positions 704–1237 (CLAAVIFIYF…DEYNEMPMPV (534 aa)) are membrane (anion exchange). 4 helical membrane-spanning segments follow: residues 705-725 (LAAV…FGGL), 750-770 (FCLL…LLVF), 792-812 (IGFW…SFLV), and 822-842 (IFAF…LVKI). At 843–893 (FQEHPLHGCSVSNSSEADSGDNATWAGTRVTLGLGNGSSAGPAGQGRPRGQ) the chain is on the extracellular side. 3 N-linked (GlcNAc...) asparagine glycosylation sites follow: asparagine 855, asparagine 864, and asparagine 878. Residues 894–914 (PNTALLSLVLMAGTFFIAFFL) traverse the membrane as a helical segment. At 915-929 (RKFKNGRFFPGRVRR) the chain is on the cytoplasmic side. The next 5 membrane-spanning stretches (helical) occupy residues 930–950 (VIGD…DYSI), 985–1005 (FPVW…ILIF), 1032–1052 (LLLI…WLAA), 1086–1106 (RVTG…GDLL), and 1109–1129 (IPLA…LNGI). Cysteine 1169 carries S-palmitoyl cysteine lipidation. A helical transmembrane segment spans residues 1170-1190 (LALLWAVMSTAASLAFPFILI).

The protein belongs to the anion exchanger (TC 2.A.31) family.

The protein resides in the apical cell membrane. Its subcellular location is the basolateral cell membrane. The catalysed reaction is hydrogencarbonate(in) + chloride(out) = hydrogencarbonate(out) + chloride(in). In terms of biological role, sodium-independent anion exchanger which mediates the electroneutral exchange of chloride for bicarbonate ions across the cell membrane. Plays an important role in osteoclast differentiation and function. Regulates bone resorption and calpain-dependent actin cytoskeleton organization in osteoclasts via anion exchange-dependent control of pH. Essential for intracellular pH regulation in CD8(+) T-cells upon CD3 stimulation, modulating CD8(+) T-cell response. The protein is Anion exchange protein 2 (SLC4A2) of Equus caballus (Horse).